A 367-amino-acid polypeptide reads, in one-letter code: Aminomethyltransferase (367 aa).

The protein belongs to the GcvT family. In terms of assembly, the glycine cleavage system is composed of four proteins: P, T, L and H.

The catalysed reaction is N(6)-[(R)-S(8)-aminomethyldihydrolipoyl]-L-lysyl-[protein] + (6S)-5,6,7,8-tetrahydrofolate = N(6)-[(R)-dihydrolipoyl]-L-lysyl-[protein] + (6R)-5,10-methylene-5,6,7,8-tetrahydrofolate + NH4(+). The glycine cleavage system catalyzes the degradation of glycine. In Mycobacterium avium (strain 104), this protein is Aminomethyltransferase.